Consider the following 476-residue polypeptide: 3-isopropylmalate dehydratase large subunit (476 aa).

Residues cysteine 353, cysteine 413, and cysteine 416 each coordinate [4Fe-4S] cluster.

Belongs to the aconitase/IPM isomerase family. LeuC type 1 subfamily. In terms of assembly, heterodimer of LeuC and LeuD. [4Fe-4S] cluster is required as a cofactor.

The catalysed reaction is (2R,3S)-3-isopropylmalate = (2S)-2-isopropylmalate. The protein operates within amino-acid biosynthesis; L-leucine biosynthesis; L-leucine from 3-methyl-2-oxobutanoate: step 2/4. Its function is as follows. Catalyzes the isomerization between 2-isopropylmalate and 3-isopropylmalate, via the formation of 2-isopropylmaleate. The chain is 3-isopropylmalate dehydratase large subunit from Yersinia enterocolitica serotype O:8 / biotype 1B (strain NCTC 13174 / 8081).